A 248-amino-acid polypeptide reads, in one-letter code: Probable transcriptional regulatory protein Smed_2641 (248 aa).

This sequence belongs to the TACO1 family.

The protein resides in the cytoplasm. The protein is Probable transcriptional regulatory protein Smed_2641 of Sinorhizobium medicae (strain WSM419) (Ensifer medicae).